The primary structure comprises 274 residues: Rhamnulose-1-phosphate aldolase (274 aa).

Glu-117 is a catalytic residue. His-141, His-143, and His-212 together coordinate Zn(2+).

The protein belongs to the aldolase class II family. RhaD subfamily. As to quaternary structure, homotetramer. Requires Zn(2+) as cofactor.

It localises to the cytoplasm. The catalysed reaction is L-rhamnulose 1-phosphate = (S)-lactaldehyde + dihydroxyacetone phosphate. It functions in the pathway carbohydrate degradation; L-rhamnose degradation; glycerone phosphate from L-rhamnose: step 3/3. In terms of biological role, catalyzes the reversible cleavage of L-rhamnulose-1-phosphate to dihydroxyacetone phosphate (DHAP) and L-lactaldehyde. The protein is Rhamnulose-1-phosphate aldolase of Pectobacterium atrosepticum (strain SCRI 1043 / ATCC BAA-672) (Erwinia carotovora subsp. atroseptica).